Reading from the N-terminus, the 430-residue chain is Serine--tRNA ligase (430 aa).

237–239 lines the L-serine pocket; that stretch reads TAE. 268–270 contributes to the ATP binding site; sequence RSE. E291 serves as a coordination point for L-serine. 355-358 lines the ATP pocket; it reads EISS. S391 contacts L-serine.

Belongs to the class-II aminoacyl-tRNA synthetase family. Type-1 seryl-tRNA synthetase subfamily. In terms of assembly, homodimer. The tRNA molecule binds across the dimer.

It localises to the cytoplasm. It catalyses the reaction tRNA(Ser) + L-serine + ATP = L-seryl-tRNA(Ser) + AMP + diphosphate + H(+). The catalysed reaction is tRNA(Sec) + L-serine + ATP = L-seryl-tRNA(Sec) + AMP + diphosphate + H(+). The protein operates within aminoacyl-tRNA biosynthesis; selenocysteinyl-tRNA(Sec) biosynthesis; L-seryl-tRNA(Sec) from L-serine and tRNA(Sec): step 1/1. Its function is as follows. Catalyzes the attachment of serine to tRNA(Ser). Is also able to aminoacylate tRNA(Sec) with serine, to form the misacylated tRNA L-seryl-tRNA(Sec), which will be further converted into selenocysteinyl-tRNA(Sec). The sequence is that of Serine--tRNA ligase from Enterobacter sp. (strain 638).